The following is a 56-amino-acid chain: Large ribosomal subunit protein bL32 (56 aa).

The disordered stretch occupies residues 1 to 35 (MAVQQNKSTRSKRGMRRSHHALRSVTISVDRTSGE). The segment covering 9–22 (TRSKRGMRRSHHAL) has biased composition (basic residues).

It belongs to the bacterial ribosomal protein bL32 family.

The sequence is that of Large ribosomal subunit protein bL32 from Blochmanniella pennsylvanica (strain BPEN).